The primary structure comprises 138 residues: ATP synthase epsilon chain, chloroplastic (138 aa).

Belongs to the ATPase epsilon chain family. F-type ATPases have 2 components, CF(1) - the catalytic core - and CF(0) - the membrane proton channel. CF(1) has five subunits: alpha(3), beta(3), gamma(1), delta(1), epsilon(1). CF(0) has three main subunits: a, b and c.

The protein resides in the plastid. Its subcellular location is the chloroplast thylakoid membrane. Produces ATP from ADP in the presence of a proton gradient across the membrane. This Galdieria sulphuraria (Red alga) protein is ATP synthase epsilon chain, chloroplastic.